The following is a 406-amino-acid chain: MKDHYDVIVVGAGPGGSIAAKTAAKEGLDVLMIEKRQEIGDPIRCAEGVGKFHLKQHIEPDPRWICADVKGSYIISPDGTRIEMAEEMSGGEVGYVLERKIFDRALANESALAGAEVRVKTRATDLIIENDTVCGIKLMHLGKEYEVRSKIVIGADGVESKVGRWAGIETSVKPSDIETCAQYLVSNANIDQEFCYFYLGNEIAPAGYVWMFPKGGNKANVGIGILGSRAGKDKPIELLNDFIEKNMPDAKIIEMVIGGVPVCGTIERTIANGLMLVGDAARQSDPITGGGIINAMDAGKIAGEIAAKAIRKGDCSIDTLQEYEDLWRATIGKEINNSLIVKDTFINFTDEDLNSLAYSLRDINFTSMSLINLLKALFKANKKLLWDLRGIFKDVIKGEIDFKYKA.

FAD-binding residues include G15, E34, C45, A46, G48, R99, A123, D279, G291, and I292.

It belongs to the geranylgeranyl reductase family. DGGGPL reductase subfamily. FAD serves as cofactor.

The enzyme catalyses a 2,3-bis-O-phytanyl-sn-glycerol 1-phospholipid + 8 oxidized 2[4Fe-4S]-[ferredoxin] = a 2,3-bis-O-(geranylgeranyl)-sn-glycerol 1-phospholipid + 8 reduced 2[4Fe-4S]-[ferredoxin] + 16 H(+). It catalyses the reaction 2,3-bis-O-(phytanyl)-sn-glycerol 1-phosphate + 8 oxidized 2[4Fe-4S]-[ferredoxin] = 2,3-bis-O-(geranylgeranyl)-sn-glycerol 1-phosphate + 8 reduced 2[4Fe-4S]-[ferredoxin] + 16 H(+). It carries out the reaction a 2,3-bis-O-phytanyl-sn-glycerol 1-phospholipid + 8 A = a 2,3-bis-O-(geranylgeranyl)-sn-glycerol 1-phospholipid + 8 AH2. The catalysed reaction is CDP-2,3-bis-O-(geranylgeranyl)-sn-glycerol + 8 AH2 = CDP-2,3-bis-O-(phytanyl)-sn-glycerol + 8 A. The enzyme catalyses archaetidylserine + 8 AH2 = 2,3-bis-O-phytanyl-sn-glycero-3-phospho-L-serine + 8 A. The protein operates within membrane lipid metabolism; glycerophospholipid metabolism. Functionally, is involved in the reduction of 2,3-digeranylgeranylglycerophospholipids (unsaturated archaeols) into 2,3-diphytanylglycerophospholipids (saturated archaeols) in the biosynthesis of archaeal membrane lipids. Catalyzes the formation of archaetidic acid (2,3-di-O-phytanyl-sn-glyceryl phosphate) from 2,3-di-O-geranylgeranylglyceryl phosphate (DGGGP) via the hydrogenation of each double bond of the isoprenoid chains. Is also probably able to reduce double bonds of geranyl groups in CDP-2,3-bis-O-(geranylgeranyl)-sn-glycerol and archaetidylserine, thus acting at various stages in the biosynthesis of archaeal membrane lipids. In Methanococcoides burtonii (strain DSM 6242 / NBRC 107633 / OCM 468 / ACE-M), this protein is Digeranylgeranylglycerophospholipid reductase 2.